The chain runs to 273 residues: Putative phosphoenolpyruvate synthase regulatory protein (273 aa).

Residue 153–160 coordinates ADP; sequence GVSRSGKT.

This sequence belongs to the pyruvate, phosphate/water dikinase regulatory protein family. PSRP subfamily.

The enzyme catalyses [pyruvate, water dikinase] + ADP = [pyruvate, water dikinase]-phosphate + AMP + H(+). It catalyses the reaction [pyruvate, water dikinase]-phosphate + phosphate + H(+) = [pyruvate, water dikinase] + diphosphate. Functionally, bifunctional serine/threonine kinase and phosphorylase involved in the regulation of the phosphoenolpyruvate synthase (PEPS) by catalyzing its phosphorylation/dephosphorylation. The protein is Putative phosphoenolpyruvate synthase regulatory protein of Delftia acidovorans (strain DSM 14801 / SPH-1).